A 115-amino-acid chain; its full sequence is Splicing factor 3B subunit 6-like protein (115 aa).

The interaction with pre-mRNA branch site stretch occupies residues 9–22; that stretch reads EVNSILFIKNLSFK. One can recognise an RRM domain in the interval 12–87; that stretch reads SILFIKNLSF…RYLVVHYYNP (76 aa).

The protein localises to the nucleus. In terms of biological role, necessary for the splicing of pre-mRNA. The sequence is that of Splicing factor 3B subunit 6-like protein from Schizosaccharomyces pombe (strain 972 / ATCC 24843) (Fission yeast).